The chain runs to 141 residues: ATP synthase F(0) complex subunit C2, mitochondrial (141 aa).

A mitochondrion-targeting transit peptide spans 1 to 66 (MYACSKFVST…RSFQTSAISR (66 aa)). Residues 82–102 (VGVAGSGAGIGTVFGSLIIGY) traverse the membrane as a helical segment. An N6,N6,N6-trimethyllysine modification is found at K109. Residues 117 to 137 (ILGFALSEAMGLFCLMVAFLI) form a helical membrane-spanning segment.

It belongs to the ATPase C chain family. F-type ATPases have 2 components, CF(1) - the catalytic core - and CF(0) - the membrane proton channel. CF(1) has five subunits: alpha(3), beta(3), gamma(1), delta(1), epsilon(1). CF(0) has three main subunits: a, b and c. Interacts with DNAJC30; interaction is direct. Trimethylated by ATPSCKMT at Lys-109. Methylation is required for proper incorporation of the C subunit into the ATP synthase complex and mitochondrial respiration.

It localises to the mitochondrion membrane. Mitochondrial membrane ATP synthase (F(1)F(0) ATP synthase or Complex V) produces ATP from ADP in the presence of a proton gradient across the membrane which is generated by electron transport complexes of the respiratory chain. F-type ATPases consist of two structural domains, F(1) - containing the extramembraneous catalytic core and F(0) - containing the membrane proton channel, linked together by a central stalk and a peripheral stalk. During catalysis, ATP synthesis in the catalytic domain of F(1) is coupled via a rotary mechanism of the central stalk subunits to proton translocation. Part of the complex F(0) domain. A homomeric c-ring of probably 10 subunits is part of the complex rotary element. The sequence is that of ATP synthase F(0) complex subunit C2, mitochondrial from Rattus norvegicus (Rat).